A 115-amino-acid polypeptide reads, in one-letter code: Large ribosomal subunit protein bL20 (115 aa).

The protein belongs to the bacterial ribosomal protein bL20 family.

Its function is as follows. Binds directly to 23S ribosomal RNA and is necessary for the in vitro assembly process of the 50S ribosomal subunit. It is not involved in the protein synthesizing functions of that subunit. This is Large ribosomal subunit protein bL20 from Methylococcus capsulatus (strain ATCC 33009 / NCIMB 11132 / Bath).